Reading from the N-terminus, the 450-residue chain is Probable helicase D10 (450 aa).

The 146-residue stretch at 95–240 (PIYEECDDTC…MFKDFFGYKI (146 aa)) folds into the Helicase ATP-binding domain. 108 to 115 (GKPGFGKT) contacts ATP. Residues 193–196 (DEVH) carry the DEAH box motif. A Helicase C-terminal domain is found at 289 to 439 (NLAHLYVNMG…TITMTPEKAV (151 aa)).

The catalysed reaction is ATP + H2O = ADP + phosphate + H(+). The chain is Probable helicase D10 (D10) from Escherichia phage T5 (Enterobacteria phage T5).